Consider the following 355-residue polypeptide: Epoxide hydrolase 2 (355 aa).

One can recognise an AB hydrolase-1 domain in the interval 78 to 323 (VLLMVHGFPE…IRGASHWVQQ (246 aa)). The Nucleophile role is filled by Asp-152. Tyr-263 (proton donor) is an active-site residue. The active-site Proton acceptor is His-319.

Belongs to the AB hydrolase superfamily. Epoxide hydrolase family.

It carries out the reaction an epoxide + H2O = an ethanediol. Its pathway is lipid metabolism. In terms of biological role, catalyzes the hydrolysis of epoxide-containing fatty acids. Active in vitro against trans-1,3-diphenylpropene oxide (t-DPPO), epoxyeicosatrienoic acids (EETs) including 8,9-EET, 11,12-EET and 14,15-EET and the linoleic acid metabolites 12,13-epoxy-9-octadecenoate (12,13-EpOME) and 9,10-epoxy-12-octadecenoate (9,10-EpOME). The sequence is that of Epoxide hydrolase 2 from Caenorhabditis elegans.